Consider the following 391-residue polypeptide: Beta sliding clamp (391 aa).

It belongs to the beta sliding clamp family. As to quaternary structure, forms a ring-shaped head-to-tail homodimer around DNA which binds and tethers DNA polymerases and other proteins to the DNA. The DNA replisome complex has a single clamp-loading complex (3 tau and 1 each of delta, delta', psi and chi subunits) which binds 3 Pol III cores (1 core on the leading strand and 2 on the lagging strand) each with a beta sliding clamp dimer. Additional proteins in the replisome are other copies of gamma, psi and chi, Ssb, DNA helicase and RNA primase.

It is found in the cytoplasm. In terms of biological role, confers DNA tethering and processivity to DNA polymerases and other proteins. Acts as a clamp, forming a ring around DNA (a reaction catalyzed by the clamp-loading complex) which diffuses in an ATP-independent manner freely and bidirectionally along dsDNA. Initially characterized for its ability to contact the catalytic subunit of DNA polymerase III (Pol III), a complex, multichain enzyme responsible for most of the replicative synthesis in bacteria; Pol III exhibits 3'-5' exonuclease proofreading activity. The beta chain is required for initiation of replication as well as for processivity of DNA replication. The chain is Beta sliding clamp (dnaN) from Synechocystis sp. (strain ATCC 27184 / PCC 6803 / Kazusa).